The following is a 404-amino-acid chain: G2/mitotic-specific cyclin-B1 (404 aa).

This sequence belongs to the cyclin family. Cyclin AB subfamily. Interacts with the CDK1 protein kinase to form a serine/threonine kinase holoenzyme complex also known as maturation promoting factor (MPF). The cyclin subunit imparts substrate specificity to the complex.

Its function is as follows. Essential for the control of the cell cycle at the G2/M (mitosis) transition. The chain is G2/mitotic-specific cyclin-B1 (ccnb1) from Oryzias latipes (Japanese rice fish).